We begin with the raw amino-acid sequence, 103 residues long: Enhancer of rudimentary homolog (103 aa).

Belongs to the E(R) family. In terms of assembly, homodimer.

Functionally, may have a role in the cell cycle. The sequence is that of Enhancer of rudimentary homolog from Aedes aegypti (Yellowfever mosquito).